The primary structure comprises 147 residues: Hemoglobin subunit epsilon (147 aa).

Residues 3–147 (HFTAEEKAAV…VAIALAHKYH (145 aa)) form the Globin domain. Phosphoserine is present on residues Ser14 and Ser51. His64 and His93 together coordinate heme b.

Belongs to the globin family. Heterotetramer of two alpha chains and two epsilon chains in early embryonic hemoglobin Gower-2; two zeta chains and two epsilon chains in early embryonic hemoglobin Gower-1. Red blood cells.

Functionally, the epsilon chain is a beta-type chain of early mammalian embryonic hemoglobin. The protein is Hemoglobin subunit epsilon (HBE1) of Pan paniscus (Pygmy chimpanzee).